The chain runs to 441 residues: MHKVAIVGRPNVGKSSLFNRLIGRREAVVADFPGVTRDAKEGLMLYHNHRITLVDTGGLWSGDEWEAAIREKAEWAMEGAQAVVFVLDPREGLSAADYEVADWLRRVGKPVIVVANKIDSPKHEVYLAELWGLGFGDPVAISAEHARGLDELLDRVMTHLPADDEDVPEVAPIRISLIGRPNVGKSSLLNAITNTDRAIVADQPGTTRDSLDVEWDFGGQRFVLVDTAGIRKKPDTAIEDYAIQRSQAAIQRSDLIWLVVNATDMGDHELKLANLAYESGKPVIVVVNKWDLVPDEELKRTEKDLNQKLHHISFAPRVYTSAINDYGIHEMLAEAMKLHDKWQSRIPTSELNRWLEVWQMRQAVPNFHGKKLKMYFMTQVETAPPTFAIFCNRADFVTRAYEGYLQNRIREDLQLAGVPVRLKWNEKGPYKRGKKDEDSED.

EngA-type G domains follow at residues 2–164 and 173–343; these read HKVA…PADD and IRIS…DKWQ. Residues 8–15, 55–59, 116–119, 179–186, 226–230, and 288–291 each bind GTP; these read GRPNVGKS, DTGGL, NKID, DTAGI, and NKWD.

This sequence belongs to the TRAFAC class TrmE-Era-EngA-EngB-Septin-like GTPase superfamily. EngA (Der) GTPase family. Associates with the 50S ribosomal subunit.

Its function is as follows. GTPase that plays an essential role in the late steps of ribosome biogenesis. This chain is GTPase Der, found in Deinococcus deserti (strain DSM 17065 / CIP 109153 / LMG 22923 / VCD115).